A 656-amino-acid chain; its full sequence is ATP-dependent RNA helicase MRH4, mitochondrial (656 aa).

The transit peptide at 1-46 (MTSFSHLSRLRMSAFLPHVCLQCRLKTVSSLPAQSSASSLLQAVRH) directs the protein to the mitochondrion. The segment at 42 to 125 (QAVRHASSAR…KDKDGSEKKQ (84 aa)) is disordered. A compositionally biased stretch (polar residues) spans 60–71 (MTLSPNVAQSTV). Residues 96 to 125 (NLRDRQRPRSQAELKRTSFKKDKDGSEKKQ) show a composition bias toward basic and acidic residues. The short motif at 157-190 (TSFDQFDLLPSVRQSVYDSALPGLEYVTPTPIQR) is the Q motif element. The Helicase ATP-binding domain occupies 210-431 (QEDMPRFDQY…RERFPQIRRL (222 aa)). 223-230 (AETGSGKT) is an ATP binding site. Residues 246–270 (AKDKEEEERMAKEELEKEQEQAKEK) form a disordered region. Residues 378-381 (DEAD) carry the DEAD box motif. Positions 480-656 (DVGYQVTGQK…EAMYRGQALI (177 aa)) constitute a Helicase C-terminal domain.

Belongs to the DEAD box helicase family. MRH4 subfamily.

It localises to the mitochondrion. The enzyme catalyses ATP + H2O = ADP + phosphate + H(+). In terms of biological role, ATP-binding RNA helicase involved in mitochondrial RNA metabolism. Required for maintenance of mitochondrial DNA. In Coccidioides immitis (strain RS) (Valley fever fungus), this protein is ATP-dependent RNA helicase MRH4, mitochondrial (MRH4).